Consider the following 235-residue polypeptide: Elongation factor Tu, chloroplastic (235 aa).

The region spanning 1 to 125 (KNMITGAAQM…KVDSYIPTPQ (125 aa)) is the tr-type G domain. 47–50 (NKED) lines the GTP pocket.

The protein belongs to the TRAFAC class translation factor GTPase superfamily. Classic translation factor GTPase family. EF-Tu/EF-1A subfamily.

The protein localises to the plastid. It localises to the chloroplast. It catalyses the reaction GTP + H2O = GDP + phosphate + H(+). GTP hydrolase that promotes the GTP-dependent binding of aminoacyl-tRNA to the A-site of ribosomes during protein biosynthesis. This Gonium pectorale (Green alga) protein is Elongation factor Tu, chloroplastic (tufA).